Consider the following 411-residue polypeptide: Arginine biosynthesis bifunctional protein ArgJ (411 aa).

Substrate contacts are provided by Thr-160, Lys-186, Thr-197, Glu-283, Asn-406, and Thr-411. The active-site Nucleophile is Thr-197.

The protein belongs to the ArgJ family. In terms of assembly, heterotetramer of two alpha and two beta chains.

It is found in the cytoplasm. The catalysed reaction is N(2)-acetyl-L-ornithine + L-glutamate = N-acetyl-L-glutamate + L-ornithine. It catalyses the reaction L-glutamate + acetyl-CoA = N-acetyl-L-glutamate + CoA + H(+). The protein operates within amino-acid biosynthesis; L-arginine biosynthesis; L-ornithine and N-acetyl-L-glutamate from L-glutamate and N(2)-acetyl-L-ornithine (cyclic): step 1/1. It functions in the pathway amino-acid biosynthesis; L-arginine biosynthesis; N(2)-acetyl-L-ornithine from L-glutamate: step 1/4. Feedback inhibition by L-ornithine. In terms of biological role, catalyzes two activities which are involved in the cyclic version of arginine biosynthesis: the synthesis of N-acetylglutamate from glutamate and acetyl-CoA as the acetyl donor, and of ornithine by transacetylation between N(2)-acetylornithine and glutamate. This Halalkalibacterium halodurans (strain ATCC BAA-125 / DSM 18197 / FERM 7344 / JCM 9153 / C-125) (Bacillus halodurans) protein is Arginine biosynthesis bifunctional protein ArgJ.